We begin with the raw amino-acid sequence, 846 residues long: Envelope glycoprotein gp160 (846 aa).

The signal sequence occupies residues 1-31 (MRAREKERNCQNLWKWGIMLLGMLMTCSAAE). Residues 32–674 (DLWVTVYYGV…ITKWLWYIKL (643 aa)) lie on the Extracellular side of the membrane. Cys-53 and Cys-73 form a disulfide bridge. Asn-87, Asn-129, Asn-151, Asn-179, Asn-182, Asn-229, Asn-236, Asn-257, Asn-271, Asn-284, and Asn-290 each carry an N-linked (GlcNAc...) asparagine; by host glycan. 5 disulfide bridges follow: Cys-118/Cys-200, Cys-125/Cys-191, Cys-130/Cys-152, Cys-213/Cys-242, and Cys-223/Cys-234. Residues 130-151 (CTDELRNSKGNGKVEEEEKRKN) are V1. Residues 152–191 (CSFNVRDKREQVYALFYKLDIVPIDNNNRTNSTNYRLINC) are V2. The interval 291-327 (CTRPYKYTRQRTSIGLRQSLYTITGKKKKTGYIGQAH) is V3. Residues Cys-291 and Cys-328 are joined by a disulfide bond. The N-linked (GlcNAc...) asparagine; by host glycan is linked to Asn-351. The tract at residues 360–370 (SSGGDPEITSH) is CD4-binding loop. 2 disulfide bridges follow: Cys-374–Cys-435 and Cys-381–Cys-408. Positions 381 to 408 (CNTSRLFNSTWNQTNSTGFNNGTVTLPC) are V4. Residues Asn-382, Asn-388, Asn-392, Asn-395, Asn-401, Asn-438, Asn-451, and Asn-452 are each glycosylated (N-linked (GlcNAc...) asparagine; by host). V5 stretches follow at residues 450 to 461 (ANNSSHETIRPG) and 453 to 461 (SSHETIRPG). The fusion peptide stretch occupies residues 502-522 (AIGLGAVFLGFLGAAGSTMGA). The immunosuppression stretch occupies residues 564–582 (KQLQARVLAVERYLRDQQL). Cys-588 and Cys-594 form a disulfide bridge. 4 N-linked (GlcNAc...) asparagine; by host glycosylation sites follow: Asn-601, Asn-606, Asn-615, and Asn-627. The stretch at 623–657 (REIDNYTGLIYSLIEESQIQQEKNEKELLELDKWA) forms a coiled coil. Residues 652-673 (ELDKWASLWNWFSITKWLWYIK) form an MPER; binding to GalCer region. The helical transmembrane segment at 675–695 (FIMIVGGLIGLRIVFAVLSVV) threads the bilayer. The Cytoplasmic portion of the chain corresponds to 696–846 (NRVRQGYSPL…IRQGLERLLL (151 aa)). A YXXL motif; contains endocytosis signal motif is present at residues 702-705 (YSPL). Residues Cys-754 and Cys-827 are each lipidated (S-palmitoyl cysteine; by host). A Di-leucine internalization motif motif is present at residues 845-846 (LL).

This sequence belongs to the HIV-1 env protein family. The mature envelope protein (Env) consists of a homotrimer of non-covalently associated gp120-gp41 heterodimers. The resulting complex protrudes from the virus surface as a spike. There seems to be as few as 10 spikes on the average virion. Interacts with host CD4, CCR5 and CXCR4. Gp120 also interacts with the C-type lectins CD209/DC-SIGN and CLEC4M/DC-SIGNR (collectively referred to as DC-SIGN(R)). Gp120 and gp41 interact with GalCer. Gp120 interacts with host ITGA4/ITGB7 complex; on CD4+ T-cells, this interaction results in rapid activation of integrin ITGAL/LFA-1, which facilitates efficient cell-to-cell spreading of HIV-1. Gp120 interacts with cell-associated heparan sulfate; this interaction increases virus infectivity on permissive cells and may be involved in infection of CD4- cells. In terms of assembly, the mature envelope protein (Env) consists of a homotrimer of non-covalently associated gp120-gp41 heterodimers. The resulting complex protrudes from the virus surface as a spike. There seems to be as few as 10 spikes on the average virion. In terms of processing, highly glycosylated by host. The high number of glycan on the protein is reffered to as 'glycan shield' because it contributes to hide protein sequence from adaptive immune system. Post-translationally, palmitoylation of the transmembrane protein and of Env polyprotein (prior to its proteolytic cleavage) is essential for their association with host cell membrane lipid rafts. Palmitoylation is therefore required for envelope trafficking to classical lipid rafts, but not for viral replication. Specific enzymatic cleavages in vivo yield mature proteins. Envelope glycoproteins are synthesized as an inactive precursor that is heavily N-glycosylated and processed likely by host cell furin in the Golgi to yield the mature SU and TM proteins. The cleavage site between SU and TM requires the minimal sequence [KR]-X-[KR]-R. About 2 of the 9 disulfide bonds of gp41 are reduced by P4HB/PDI, following binding to CD4 receptor.

The protein localises to the virion membrane. It localises to the host cell membrane. Its subcellular location is the host endosome membrane. Oligomerizes in the host endoplasmic reticulum into predominantly trimers. In a second time, gp160 transits in the host Golgi, where glycosylation is completed. The precursor is then proteolytically cleaved in the trans-Golgi and thereby activated by cellular furin or furin-like proteases to produce gp120 and gp41. Functionally, attaches the virus to the host lymphoid cell by binding to the primary receptor CD4. This interaction induces a structural rearrangement creating a high affinity binding site for a chemokine coreceptor like CXCR4 and/or CCR5. Acts as a ligand for CD209/DC-SIGN and CLEC4M/DC-SIGNR, which are respectively found on dendritic cells (DCs), and on endothelial cells of liver sinusoids and lymph node sinuses. These interactions allow capture of viral particles at mucosal surfaces by these cells and subsequent transmission to permissive cells. HIV subverts the migration properties of dendritic cells to gain access to CD4+ T-cells in lymph nodes. Virus transmission to permissive T-cells occurs either in trans (without DCs infection, through viral capture and transmission), or in cis (following DCs productive infection, through the usual CD4-gp120 interaction), thereby inducing a robust infection. In trans infection, bound virions remain infectious over days and it is proposed that they are not degraded, but protected in non-lysosomal acidic organelles within the DCs close to the cell membrane thus contributing to the viral infectious potential during DCs' migration from the periphery to the lymphoid tissues. On arrival at lymphoid tissues, intact virions recycle back to DCs' cell surface allowing virus transmission to CD4+ T-cells. Its function is as follows. Acts as a class I viral fusion protein. Under the current model, the protein has at least 3 conformational states: pre-fusion native state, pre-hairpin intermediate state, and post-fusion hairpin state. During fusion of viral and target intracellular membranes, the coiled coil regions (heptad repeats) assume a trimer-of-hairpins structure, positioning the fusion peptide in close proximity to the C-terminal region of the ectodomain. The formation of this structure appears to drive apposition and subsequent fusion of viral and target cell membranes. Complete fusion occurs in host cell endosomes and is dynamin-dependent, however some lipid transfer might occur at the plasma membrane. The virus undergoes clathrin-dependent internalization long before endosomal fusion, thus minimizing the surface exposure of conserved viral epitopes during fusion and reducing the efficacy of inhibitors targeting these epitopes. Membranes fusion leads to delivery of the nucleocapsid into the cytoplasm. In Human immunodeficiency virus type 1 group M subtype D (isolate NDK) (HIV-1), this protein is Envelope glycoprotein gp160.